We begin with the raw amino-acid sequence, 128 residues long: MTFSVKSPILGFEGIKNVEITKIDDFFVKMQDKDGDTSFTMINPYSLRNYEFDIPTYYQDLMQISDKSELQVYNMLVISSPIEESSVNFMAPIVCNTTNMTLSQVILDPVNYPQYSQAEKISTLLKKK.

Belongs to the FliW family. Interacts with translational regulator CsrA and flagellin(s).

It localises to the cytoplasm. Its function is as follows. Acts as an anti-CsrA protein, binds CsrA and prevents it from repressing translation of its target genes, one of which is flagellin. Binds to flagellin and participates in the assembly of the flagellum. The protein is Flagellar assembly factor FliW of Campylobacter fetus subsp. fetus (strain 82-40).